The following is a 349-amino-acid chain: 4-hydroxythreonine-4-phosphate dehydrogenase (349 aa).

Positions 141 and 142 each coordinate substrate. A divalent metal cation-binding residues include His176, His221, and His276. Substrate-binding residues include Lys284, Asn293, and Arg302.

It belongs to the PdxA family. As to quaternary structure, homodimer. It depends on Zn(2+) as a cofactor. Mg(2+) is required as a cofactor. Requires Co(2+) as cofactor.

It is found in the cytoplasm. It carries out the reaction 4-(phosphooxy)-L-threonine + NAD(+) = 3-amino-2-oxopropyl phosphate + CO2 + NADH. It participates in cofactor biosynthesis; pyridoxine 5'-phosphate biosynthesis; pyridoxine 5'-phosphate from D-erythrose 4-phosphate: step 4/5. In terms of biological role, catalyzes the NAD(P)-dependent oxidation of 4-(phosphooxy)-L-threonine (HTP) into 2-amino-3-oxo-4-(phosphooxy)butyric acid which spontaneously decarboxylates to form 3-amino-2-oxopropyl phosphate (AHAP). In Methylorubrum extorquens (strain CM4 / NCIMB 13688) (Methylobacterium extorquens), this protein is 4-hydroxythreonine-4-phosphate dehydrogenase.